The sequence spans 216 residues: Large ribosomal subunit protein uL3 (216 aa).

The interval glycine 137–proline 158 is disordered.

It belongs to the universal ribosomal protein uL3 family. Part of the 50S ribosomal subunit. Forms a cluster with proteins L14 and L19.

One of the primary rRNA binding proteins, it binds directly near the 3'-end of the 23S rRNA, where it nucleates assembly of the 50S subunit. The protein is Large ribosomal subunit protein uL3 of Pseudarthrobacter chlorophenolicus (strain ATCC 700700 / DSM 12829 / CIP 107037 / JCM 12360 / KCTC 9906 / NCIMB 13794 / A6) (Arthrobacter chlorophenolicus).